The following is a 217-amino-acid chain: Adenylate kinase (217 aa).

Residue 10-15 coordinates ATP; sequence GAGKGT. Positions 30–59 are NMP; it reads STGEILRAAVKSKTPMGVKAKEYMDQGALV. AMP-binding positions include Thr31, Arg36, 57-59, 85-88, and Gln92; these read ALV and GFPR. Residues 126–163 form an LID region; sequence GRRVCRACGRAFHVKFDPPLVDGVCDACGGELYQRDDD. Residue Arg127 coordinates ATP. Positions 130, 133, 150, and 153 each coordinate Zn(2+). The AMP site is built by Arg160 and Arg171. Glu199 is an ATP binding site.

Belongs to the adenylate kinase family. As to quaternary structure, monomer.

It is found in the cytoplasm. It carries out the reaction AMP + ATP = 2 ADP. The protein operates within purine metabolism; AMP biosynthesis via salvage pathway; AMP from ADP: step 1/1. In terms of biological role, catalyzes the reversible transfer of the terminal phosphate group between ATP and AMP. Plays an important role in cellular energy homeostasis and in adenine nucleotide metabolism. The sequence is that of Adenylate kinase from Geobacter sulfurreducens (strain ATCC 51573 / DSM 12127 / PCA).